A 388-amino-acid polypeptide reads, in one-letter code: P2X purinoceptor 4 (388 aa).

Over 1–33 the chain is Cytoplasmic; it reads MAGCCAALAAFLFEYDTPRIVLIRSRKVGLMNR. The helical transmembrane segment at 34–54 threads the bilayer; it reads AVQLLILAYVIGWVFVWEKGY. The Extracellular portion of the chain corresponds to 55-338; it reads QETDSVVSSV…KFDIIPTMIN (284 aa). ATP is bound by residues K67 and K69. Residues K67 and K69 each contribute to the CTP site. N-linked (GlcNAc...) asparagine glycosylation is found at N75 and N110. 3 cysteine pairs are disulfide-bonded: C116–C165, C126–C149, and C132–C159. N-linked (GlcNAc...) asparagine glycans are attached at residues N153 and N184. T186 and L188 together coordinate ATP. Position 186 (T186) interacts with CTP. N-linked (GlcNAc...) asparagine glycosylation is found at N199 and N208. 2 disulfides stabilise this stretch: C217–C227 and C261–C270. Residues N293, R295, and K313 each coordinate ATP. CTP contacts are provided by N293, R295, and K313. The helical transmembrane segment at 339–359 threads the bilayer; sequence IGSGLALLGMATVLCDIIVLY. Residues 360-388 are Cytoplasmic-facing; the sequence is CMKKRLYYREKKYKYVEDYEQGLASELDQ.

Belongs to the P2X receptor family. As to quaternary structure, functional P2RXs are organized as homomeric and heteromeric trimers. Forms heterotrimer with P2RX1. Interacts with P2RX7 (via C-terminus); this interaction is functional only in the presence of ATP. Forms heterotrimer with P2RX4; functional differences between homomeric P2RX4 and P2RX4/6 heterotrimer are minor. Interacts with AP1M2.

It is found in the cell membrane. The protein localises to the lysosome membrane. The enzyme catalyses K(+)(in) = K(+)(out). The catalysed reaction is Na(+)(in) = Na(+)(out). It catalyses the reaction Ca(2+)(in) = Ca(2+)(out). With respect to regulation, activated by ATP. pH-dependent and inhibited by acidic pH. Functionally, ATP-gated nonselective transmembrane cation channel permeable to potassium, sodium and calcium. CTP, but not GTP or UTP, functions as a weak affinity agonist for P2RX4. Activated by extracellularly released ATP, it plays multiple role in immunity and central nervous system physiology. Plays a key role in initial steps of T-cell activation and Ca(2+) microdomain formation. Also participates in basal T-cell activity without TCR/CD3 stimulation. Promotes the differentiation and activation of Th17 cells via expression of retinoic acid-related orphan receptor C/RORC. Upon activation, drives microglia motility via the PI3K/Akt pathway. Could also function as an ATP-gated cation channel of lysosomal membranes. This is P2X purinoceptor 4 (P2RX4) from Homo sapiens (Human).